The chain runs to 358 residues: Probable D-xylulose reductase A (358 aa).

Zn(2+)-binding residues include cysteine 47, histidine 72, and glutamate 73. Residue 182-187 participates in NAD(+) binding; sequence GAGPVG.

Belongs to the zinc-containing alcohol dehydrogenase family. The cofactor is Zn(2+).

The catalysed reaction is xylitol + NAD(+) = D-xylulose + NADH + H(+). It functions in the pathway carbohydrate degradation; L-arabinose degradation via L-arabinitol; D-xylulose 5-phosphate from L-arabinose (fungal route): step 4/5. Functionally, xylitol dehydrogenase which catalyzes the conversion of xylitol to D-xylulose. Xylose is a major component of hemicelluloses such as xylan. Most fungi utilize D-xylose via three enzymatic reactions, xylose reductase (XR), xylitol dehydrogenase (XDH), and xylulokinase, to form xylulose 5-phosphate, which enters pentose phosphate pathway. This is Probable D-xylulose reductase A (xdhA) from Aspergillus fumigatus (strain CBS 144.89 / FGSC A1163 / CEA10) (Neosartorya fumigata).